Here is a 929-residue protein sequence, read N- to C-terminus: Facilitated trehalose transporter Tret1 (929 aa).

The disordered stretch occupies residues 1–275 (MSGRDNRAAG…VGYQQQKATS (275 aa)). Topologically, residues 1 to 462 (MSGRDNRAAG…LEVYRPTTNP (462 aa)) are cytoplasmic. The span at 10 to 26 (GAGGGSGGGGGGGGGGG) shows a compositional bias: gly residues. Residues 41–59 (KLKEKLTRAGEELGYHRVE) are compositionally biased toward basic and acidic residues. Polar residues predominate over residues 60 to 72 (SNLSASNTATSLD). Composition is skewed to low complexity over residues 85 to 141 (AAPQ…QPLR), 168 to 178 (QEIQQQQLQQQ), and 237 to 254 (SNSN…VAAD). Residues serine 320, serine 321, and serine 322 each carry the phosphoserine modification. Residues 352 to 371 (VLHGSSTDSDEEGEDAEHKR) are disordered. Residues serine 392 and serine 394 each carry the phosphoserine modification. The interval 398–420 (FLSSRQNFQQQRSISTDSRKSRR) is disordered. Polar residues predominate over residues 402–413 (RQNFQQQRSIST). The chain crosses the membrane as a helical span at residues 463–483 (IYIWTQVLAALSVSLGSLVVG). Over 484–512 (FSSAYTSPALVSMTDRNLTSFDVSTEDAS) the chain is Extracellular. N-linked (GlcNAc...) asparagine glycosylation occurs at asparagine 500. The helical transmembrane segment at 513 to 533 (WVGGIMPLAGLAGGIAGGPLI) threads the bilayer. Residues 534–541 (EYLGRRNT) lie on the Cytoplasmic side of the membrane. The helical transmembrane segment at 542-562 (ILATAVPFIISWLLIACAVNV) threads the bilayer. At 563–569 (PMVLSGR) the chain is on the extracellular side. Residues 570–590 (FLAGFCVGIASLSLPVYLGET) traverse the membrane as a helical segment. Residues 591 to 596 (VQPEVR) are Cytoplasmic-facing. Residues 597-617 (GTLGLLPTAFGNIGILLCFIA) form a helical membrane-spanning segment. The Extracellular portion of the chain corresponds to 618 to 624 (GTYMDWS). The helical transmembrane segment at 625-645 (MLAFLGGALPVPFLILMFLIP) threads the bilayer. The Cytoplasmic segment spans residues 646-708 (ETPRWYVSRG…ELLKRSNLKP (63 aa)). The helical transmembrane segment at 709–729 (LSISLGLMFFQQLSGINAVIF) threads the bilayer. Topologically, residues 730–745 (YTVQIFKDAGSTLDGN) are extracellular. The helical transmembrane segment at 746 to 766 (VCTIIVGTVNFIATFIGILLI) threads the bilayer. Residues 767–772 (DRAGRK) lie on the Cytoplasmic side of the membrane. Residues 773–793 (ILLYVSNIAMILTLFVLGGFF) traverse the membrane as a helical segment. The Extracellular portion of the chain corresponds to 794–804 (YCKANGMDVSN). Residues 805-825 (VGLLPLCCFVVYILGFSLGFG) traverse the membrane as a helical segment. Residues 826-839 (PIPWLMMGEILPAK) lie on the Cytoplasmic side of the membrane. Residues 840–860 (IRGSAASVATAFNWTCTFVVT) form a helical membrane-spanning segment. The Extracellular portion of the chain corresponds to 861–873 (KSFLDMIKLIGAH). A helical membrane pass occupies residues 874 to 894 (GAFWLFGVICCIGMFFVIFCV). Residues 895 to 929 (PETQGKTLEDIERKMMGRVRRMSSVANIKPLSFNM) lie on the Cytoplasmic side of the membrane. 2 positions are modified to phosphoserine: serine 917 and serine 918.

The protein belongs to the major facilitator superfamily. Sugar transporter (TC 2.A.1.1) family. Trehalose transporter subfamily.

Its subcellular location is the cell membrane. Low-capacity facilitative transporter for trehalose. Does not transport maltose, sucrose or lactose. Mediates the bidirectional transfer of trehalose. Responsible for the transport of trehalose synthesized in the fat body and the incorporation of trehalose into other tissues that require a carbon source, thereby regulating trehalose levels in the hemolymph. This Drosophila grimshawi (Hawaiian fruit fly) protein is Facilitated trehalose transporter Tret1.